Reading from the N-terminus, the 234-residue chain is Peptidase E (234 aa).

Residues serine 123, aspartate 138, and histidine 160 each act as charge relay system in the active site.

Belongs to the peptidase S51 family.

The protein resides in the cytoplasm. The catalysed reaction is Dipeptidase E catalyzes the hydrolysis of dipeptides Asp-|-Xaa. It does not act on peptides with N-terminal Glu, Asn or Gln, nor does it cleave isoaspartyl peptides.. In terms of biological role, hydrolyzes dipeptides containing N-terminal aspartate residues. May play a role in allowing the cell to use peptide aspartate to spare carbon otherwise required for the synthesis of the aspartate family of amino acids. The sequence is that of Peptidase E from Actinobacillus pleuropneumoniae serotype 7 (strain AP76).